A 452-amino-acid chain; its full sequence is tRNA modification GTPase MnmE (452 aa).

Residues Arg22, Glu79, and Lys119 each coordinate (6S)-5-formyl-5,6,7,8-tetrahydrofolate. In terms of domain architecture, TrmE-type G spans 215–375 (GMKVVIAGRP…LRQHLKQSMG (161 aa)). Asn225 is a binding site for K(+). GTP is bound by residues 225–230 (NAGKSS), 244–250 (TDIAGTT), 269–272 (DTAG), and 333–336 (NKAD). Ser229 is a Mg(2+) binding site. K(+)-binding residues include Thr244, Ile246, and Thr249. Mg(2+) is bound at residue Thr250. A (6S)-5-formyl-5,6,7,8-tetrahydrofolate-binding site is contributed by Lys452.

Belongs to the TRAFAC class TrmE-Era-EngA-EngB-Septin-like GTPase superfamily. TrmE GTPase family. In terms of assembly, homodimer. Heterotetramer of two MnmE and two MnmG subunits. The cofactor is K(+).

The protein resides in the cytoplasm. Functionally, exhibits a very high intrinsic GTPase hydrolysis rate. Involved in the addition of a carboxymethylaminomethyl (cmnm) group at the wobble position (U34) of certain tRNAs, forming tRNA-cmnm(5)s(2)U34. The polypeptide is tRNA modification GTPase MnmE (Histophilus somni (strain 129Pt) (Haemophilus somnus)).